The chain runs to 177 residues: NADH-quinone oxidoreductase subunit B (177 aa).

[4Fe-4S] cluster-binding residues include cysteine 56, cysteine 57, cysteine 121, and cysteine 151.

It belongs to the complex I 20 kDa subunit family. In terms of assembly, NDH-1 is composed of 14 different subunits. Subunits NuoB, C, D, E, F, and G constitute the peripheral sector of the complex. [4Fe-4S] cluster serves as cofactor.

The protein resides in the cell inner membrane. The enzyme catalyses a quinone + NADH + 5 H(+)(in) = a quinol + NAD(+) + 4 H(+)(out). NDH-1 shuttles electrons from NADH, via FMN and iron-sulfur (Fe-S) centers, to quinones in the respiratory chain. Couples the redox reaction to proton translocation (for every two electrons transferred, four hydrogen ions are translocated across the cytoplasmic membrane), and thus conserves the redox energy in a proton gradient. The polypeptide is NADH-quinone oxidoreductase subunit B (Roseobacter denitrificans (strain ATCC 33942 / OCh 114) (Erythrobacter sp. (strain OCh 114))).